Consider the following 182-residue polypeptide: Ribosome-recycling factor (182 aa).

Residues 137 to 158 (KKSEKESEISEDQSRDEQDNVQ) form a disordered region.

The protein belongs to the RRF family.

The protein resides in the cytoplasm. Functionally, responsible for the release of ribosomes from messenger RNA at the termination of protein biosynthesis. May increase the efficiency of translation by recycling ribosomes from one round of translation to another. In Prochlorococcus marinus (strain MIT 9211), this protein is Ribosome-recycling factor.